A 165-amino-acid polypeptide reads, in one-letter code: Phosphopantetheine adenylyltransferase (165 aa).

Ser-9 provides a ligand contact to substrate. ATP contacts are provided by residues 9–10 (SF) and His-17. Residues Lys-41, Ile-75, and Arg-89 each contribute to the substrate site. Residues 90–92 (GVR), Glu-100, and 125–131 (YLFVRSD) contribute to the ATP site.

Belongs to the bacterial CoaD family. As to quaternary structure, homohexamer. Mg(2+) is required as a cofactor.

The protein resides in the cytoplasm. The catalysed reaction is (R)-4'-phosphopantetheine + ATP + H(+) = 3'-dephospho-CoA + diphosphate. It functions in the pathway cofactor biosynthesis; coenzyme A biosynthesis; CoA from (R)-pantothenate: step 4/5. In terms of biological role, reversibly transfers an adenylyl group from ATP to 4'-phosphopantetheine, yielding dephospho-CoA (dPCoA) and pyrophosphate. In Borrelia duttonii (strain Ly), this protein is Phosphopantetheine adenylyltransferase.